The chain runs to 530 residues: Alpha-(1,3)-fucosyltransferase 4 (530 aa).

Disordered stretches follow at residues 1–48 (MRRL…RAVP) and 66–113 (HLGG…TPAD). The Cytoplasmic portion of the chain corresponds to 1-147 (MRRLWGAARK…GGRRRWRRGR (147 aa)). The segment covering 88 to 106 (ASGERQRRLEPQLQHESRC) has biased composition (basic and acidic residues). The helical; Signal-anchor for type II membrane protein transmembrane segment at 148–172 (GLPWTVCVLAAAGLTCTALITYACW) threads the bilayer. At 173-530 (GQLPPLPWAS…IRNLASWFER (358 aa)) the chain is on the lumenal side. N-linked (GlcNAc...) asparagine glycans are attached at residues Asn-216 and Asn-315.

The protein belongs to the glycosyltransferase 10 family.

The protein localises to the golgi apparatus. It localises to the golgi stack membrane. It catalyses the reaction a beta-D-galactosyl-(1-&gt;4)-N-acetyl-beta-D-glucosaminyl derivative + GDP-beta-L-fucose = a beta-D-galactosyl-(1-&gt;4)-[alpha-L-fucosyl-(1-&gt;3)]-N-acetyl-beta-D-glucosaminyl derivative + GDP + H(+). The enzyme catalyses an N-acetyl-alpha-neuraminyl-(2-&gt;3)-beta-D-galactosyl-(1-&gt;4)-N-acetyl-beta-D-glucosaminyl derivative + GDP-beta-L-fucose = an alpha-Neu5Ac-(2-&gt;3)-beta-D-Gal-(1-&gt;4)-[alpha-L-Fuc-(1-&gt;3)]-beta-D-GlcNAc derivative + GDP + H(+). The catalysed reaction is an alpha-Neu5Ac-(2-&gt;3)-beta-D-Gal-(1-&gt;4)-beta-D-GlcNAc-(1-&gt;3)-beta-D-Gal-(1-&gt;4)-beta-D-GlcNAc derivative + GDP-beta-L-fucose = an alpha-Neu5Ac-(2-&gt;3)-beta-D-Gal-(1-&gt;4)-beta-D-GlcNAc-(1-&gt;3)-beta-D-Gal-(1-&gt;4)-[alpha-L-Fuc-(1-&gt;3)]-beta-D-GlcNAc derivative + GDP + H(+). It carries out the reaction an alpha-Neu5Ac-(2-&gt;3)-beta-D-Gal-(1-&gt;4)-beta-D-GlcNAc6S derivative + GDP-beta-L-fucose = an alpha-Neu5Ac-(2-&gt;3)-beta-D-Gal-(1-&gt;4)-[alpha-L-Fuc-(1-&gt;3)]-beta-D-GlcNAc6S derivative + GDP + H(+). The protein operates within protein modification; protein glycosylation. Catalyzes alpha(1-&gt;3) linkage of fucosyl moiety transferred from GDP-beta-L-fucose to N-acetyl glucosamine (GlcNAc) within type 2 lactosamine (LacNAc, Gal-beta(1-&gt;4)GlcNAc) glycan attached to N- or O-linked glycoproteins. Robustly fucosylates nonsialylated distal LacNAc unit of the polylactosamine chain to form Lewis X antigen (CD15), a glycan determinant known to mediate important cellular functions in development and immunity. Fucosylates with lower efficiency sialylated LacNAc acceptors to form sialyl Lewis X and 6-sulfo sialyl Lewis X determinants that serve as recognition epitopes for C-type lectins. Together with FUT7 contributes to SELE, SELL and SELP selectin ligand biosynthesis and selectin-dependent lymphocyte homing, leukocyte migration and blood leukocyte homeostasis. In a cell type specific manner, may also fucosylate the internal LacNAc unit of the polylactosamine chain to form VIM-2 antigen that serves as recognition epitope for SELE. This Pan troglodytes (Chimpanzee) protein is Alpha-(1,3)-fucosyltransferase 4 (FUT4).